The primary structure comprises 42 residues: Histone H1B (42 aa).

The H15 domain occupies 1 to 42 (TYYELIKAAILALKERNGSSAQAIKKYILENNKIEFQQTFLR).

Belongs to the histone H1/H5 family.

The protein localises to the nucleus. It localises to the chromosome. In terms of biological role, histones H1 are necessary for the condensation of nucleosome chains into higher-order structures. In Olisthodiscus luteus (Marine phytoflagellate), this protein is Histone H1B.